A 460-amino-acid chain; its full sequence is tRNA hydroxylation protein P (460 aa).

This sequence belongs to the peptidase U32 family.

Functionally, involved in prephenate-dependent formation of 5-hydroxyuridine (ho5U) modification at position 34 in tRNAs, the first step in 5-carboxymethoxyuridine (cmo5U) biosynthesis. The polypeptide is tRNA hydroxylation protein P (Haemophilus influenzae (strain ATCC 51907 / DSM 11121 / KW20 / Rd)).